The primary structure comprises 452 residues: Exodeoxyribonuclease 7 large subunit (452 aa).

Belongs to the XseA family. In terms of assembly, heterooligomer composed of large and small subunits.

The protein localises to the cytoplasm. The catalysed reaction is Exonucleolytic cleavage in either 5'- to 3'- or 3'- to 5'-direction to yield nucleoside 5'-phosphates.. In terms of biological role, bidirectionally degrades single-stranded DNA into large acid-insoluble oligonucleotides, which are then degraded further into small acid-soluble oligonucleotides. The chain is Exodeoxyribonuclease 7 large subunit from Bacillus cereus (strain B4264).